Here is a 999-residue protein sequence, read N- to C-terminus: Embryonic polarity protein dorsal (999 aa).

Residues 1–44 (MFPNQNNGAAPGQGPAVDGQQSLNYNGLPAQQQQQLAQSTKNVR) are disordered. In terms of domain architecture, RHD spans 47 to 342 (PYVKITEQPA…TFWNLHRHLK (296 aa)). Ser312 carries the post-translational modification Phosphoserine; by PKA. Disordered stretches follow at residues 389 to 424 (FNHE…EQYT) and 670 to 851 (QARK…SVSG). A compositionally biased stretch (low complexity) spans 402 to 424 (EQEQSVQQEQYTQEQSLQQEQYT). Positions 668–677 (NSQARKPETP) match the Nuclear export signal motif. Over residues 677–686 (PMRPVPPVPP) the composition is skewed to pro residues. The span at 710-719 (KQDSNAENRS) shows a compositional bias: basic and acidic residues. Polar residues predominate over residues 720-734 (IEANTVQTKPSTGES). The short motif at 756–773 (KKPGFFSKLFSRRKSKPD) is the Nuclear localization signal element. Low complexity-rich tracts occupy residues 819–829 (SNPAPAKSSPV) and 836–851 (SKLT…SVSG).

In terms of assembly, interacts with tamo via the nuclear localization signal. Interacts with emb, a component of the nuclear export complex. As to expression, in unchallenged larvae, expression of both isoforms is seen in fat body and gut (isoform A is more abundant). After immune challenge levels of both isoforms are enhanced.

It is found in the cytoplasm. Its subcellular location is the nucleus. In terms of biological role, embryonic developmental transcription factor. The lateral or ventral identity of a cell depends upon the concentration of this protein in its nucleus during the blastoderm stage. Acts as a morphogenetic transcription factor that specifically binds to the kappa-B-related consensus sequence 5'-GRGAAAANCC-3', located in the enhancer region of zygotic genes such as Zen, Twist, Snail and Decapentaplegic, promoting their expression. Part of a signaling pathway involving NF-kappa-B and Toll-related receptors, that functions in the apoptosis of unfit cells during cell competition. Mediates an immune response in larvae. May be part of a NF-kappa-B and Tollo signaling cascade that regulates development of the peripheral nervous system. The sequence is that of Embryonic polarity protein dorsal (dl) from Drosophila melanogaster (Fruit fly).